A 132-amino-acid polypeptide reads, in one-letter code: MPKEFNRSDRVADAMQRSLANAIRMEIQDPRVGMVNINAVEVSRDLALAKVFVTFIGVDDERAIETSVSILNKAAGFLRNVVSKDLTIRSTPRIHFYYDKTAVRGQVLSSLIDRAIAEDKSHHQDDAGQEEE.

It belongs to the RbfA family. As to quaternary structure, monomer. Binds 30S ribosomal subunits, but not 50S ribosomal subunits or 70S ribosomes.

The protein resides in the cytoplasm. Functionally, one of several proteins that assist in the late maturation steps of the functional core of the 30S ribosomal subunit. Associates with free 30S ribosomal subunits (but not with 30S subunits that are part of 70S ribosomes or polysomes). Required for efficient processing of 16S rRNA. May interact with the 5'-terminal helix region of 16S rRNA. This Teredinibacter turnerae (strain ATCC 39867 / T7901) protein is Ribosome-binding factor A.